A 133-amino-acid chain; its full sequence is uncharacterized protein (133 aa).

Belongs to the mimivirus L87/L94 family.

This is an uncharacterized protein from Acanthamoeba polyphaga mimivirus (APMV).